The sequence spans 545 residues: Probable target of rapamycin complex 2 subunit BIT2 (545 aa).

2 disordered regions span residues 1-24 (MATDLNRKRSATSGSLSVTNPNIK) and 78-166 (DGSN…GTSS). Polar residues-rich tracts occupy residues 11-24 (ATSGSLSVTNPNIK), 106-130 (IGSSSSNRMEGNTTSNDSLFSSNSR), and 151-166 (RSGSKNYGTVITGTSS).

As to quaternary structure, interacts with the target of rapamycin complex 2 (TORC2) subunit TSC11 and the TORC2 effectors SLM1 and SLM2.

The protein is Probable target of rapamycin complex 2 subunit BIT2 (BIT2) of Saccharomyces cerevisiae (strain ATCC 204508 / S288c) (Baker's yeast).